A 139-amino-acid polypeptide reads, in one-letter code: MRVMGLDVGSKTVGVAISDPLGFTAQGVEIIKINEEAKEFGFDRLGELVKEYQVDKFVVGLPKNMNNTEGPRVEASKAYGDKIKEIFNLPVDYQDERLTTVQAERMLVEQADVSRGKRKKVIDKLAAQLILQNYLDRMF.

The protein belongs to the YqgF nuclease family.

Its subcellular location is the cytoplasm. Its function is as follows. Could be a nuclease involved in processing of the 5'-end of pre-16S rRNA. The chain is Putative pre-16S rRNA nuclease from Streptococcus thermophilus (strain CNRZ 1066).